The following is a 158-amino-acid chain: C-type lectin BML-2 (158 aa).

The N-terminal stretch at 1–23 (MGHFTFTGLCLLAMFLSLRGAEC) is a signal peptide. 4 disulfides stabilise this stretch: C26–C37, C54–C154, C61–C156, and C129–C146. The 123-residue stretch at 33-155 (KNGLCYKVFS…CESLHPFLCQ (123 aa)) folds into the C-type lectin domain. Positions 119-121 (EPN) match the Mannose-binding motif. N121 carries an N-linked (GlcNAc...) asparagine glycan. Residues E127, N142, and D143 each contribute to the Ca(2+) site.

This sequence belongs to the true venom lectin family. In terms of assembly, dimer. Probably non-covalently linked. As to expression, expressed by the venom gland.

It localises to the secreted. Recombinant C-type lectin BML-2 is able to agglutinate erythrocytes. May be a calcium-dependent lectin. In Bungarus multicinctus (Many-banded krait), this protein is C-type lectin BML-2.